The following is an 820-amino-acid chain: Phospholipase D alpha 3 (820 aa).

The C2 domain maps to 1 to 133 (MTEQLLLHGT…ITGQPIDRWL (133 aa)). Residue Asp-194 participates in Ca(2+) binding. The PLD phosphodiesterase 1 domain maps to 334-371 (TMFTHHQKTIVVDSEVDGSLTKRRIVSFLGGIDLCDGR). Catalysis depends on residues His-339, Lys-341, and Asp-346. His-339 contributes to the a 1,2-diacyl-sn-glycero-3-phosphate binding site. Ca(2+)-binding residues include His-377 and His-411. 2 residues coordinate a 1,2-diacyl-sn-glycero-3-phosphate: Gln-528 and His-667. In terms of domain architecture, PLD phosphodiesterase 2 spans 662–689 (FMIYVHSKMMIVDDEYIIIGSANINQRS). Residues His-667, Lys-669, and Asp-674 contribute to the active site. Glu-730 lines the Ca(2+) pocket.

It belongs to the phospholipase D family. C2-PLD subfamily. The cofactor is Ca(2+). As to expression, expressed in buds, flowers, siliques, stems, old leaves and roots. Expressed in the sieve elements.

The protein localises to the cytoplasm. The protein resides in the membrane. It carries out the reaction a 1,2-diacyl-sn-glycero-3-phosphocholine + H2O = a 1,2-diacyl-sn-glycero-3-phosphate + choline + H(+). In terms of biological role, hydrolyzes glycerol-phospholipids at the terminal phosphodiesteric bond to generate phosphatidic acids (PA). Active with phosphatidylcholine (PC), phosphatidylethanolamine (PE), phosphatidylglycerol (PG), and phosphatidylserine (PS) as substrates. No activity toward phosphatidylinositol (PI) or PIP2. Positively mediates plant responses to hyperosmotic stresses and promotes root growth, flowering, and stress avoidance. Not involved in the abscisic acid regulation of stomatal movement and transpirational water loss. The sequence is that of Phospholipase D alpha 3 from Arabidopsis thaliana (Mouse-ear cress).